The following is a 100-amino-acid chain: Urease subunit gamma (100 aa).

Belongs to the urease gamma subunit family. As to quaternary structure, heterotrimer of UreA (gamma), UreB (beta) and UreC (alpha) subunits. Three heterotrimers associate to form the active enzyme.

Its subcellular location is the cytoplasm. The catalysed reaction is urea + 2 H2O + H(+) = hydrogencarbonate + 2 NH4(+). It functions in the pathway nitrogen metabolism; urea degradation; CO(2) and NH(3) from urea (urease route): step 1/1. This Rhizobium etli (strain ATCC 51251 / DSM 11541 / JCM 21823 / NBRC 15573 / CFN 42) protein is Urease subunit gamma.